Consider the following 37-residue polypeptide: Large ribosomal subunit protein bL36c (37 aa).

The protein belongs to the bacterial ribosomal protein bL36 family.

It localises to the plastid. It is found in the chloroplast. The sequence is that of Large ribosomal subunit protein bL36c from Welwitschia mirabilis (Tree tumbo).